A 155-amino-acid chain; its full sequence is SsrA-binding protein (155 aa).

Belongs to the SmpB family.

The protein localises to the cytoplasm. Functionally, required for rescue of stalled ribosomes mediated by trans-translation. Binds to transfer-messenger RNA (tmRNA), required for stable association of tmRNA with ribosomes. tmRNA and SmpB together mimic tRNA shape, replacing the anticodon stem-loop with SmpB. tmRNA is encoded by the ssrA gene; the 2 termini fold to resemble tRNA(Ala) and it encodes a 'tag peptide', a short internal open reading frame. During trans-translation Ala-aminoacylated tmRNA acts like a tRNA, entering the A-site of stalled ribosomes, displacing the stalled mRNA. The ribosome then switches to translate the ORF on the tmRNA; the nascent peptide is terminated with the 'tag peptide' encoded by the tmRNA and targeted for degradation. The ribosome is freed to recommence translation, which seems to be the essential function of trans-translation. This Streptococcus pneumoniae (strain 70585) protein is SsrA-binding protein.